Here is a 580-residue protein sequence, read N- to C-terminus: Acyl-coenzyme A synthetase ACSM4, mitochondrial (580 aa).

The N-terminal 22 residues, 1 to 22 (MKVLLHCQRLRFIWLAKPAGRH), are a transit peptide targeting the mitochondrion. Residues 229-237 (TSGTTGSPK), 368-373 (EGYGQT), Asp455, Arg470, and Lys566 each bind ATP.

It belongs to the ATP-dependent AMP-binding enzyme family. It depends on Mg(2+) as a cofactor. Mn(2+) is required as a cofactor.

It is found in the mitochondrion. The catalysed reaction is a medium-chain fatty acid + ATP + CoA = a medium-chain fatty acyl-CoA + AMP + diphosphate. The enzyme catalyses hexanoate + ATP + CoA = hexanoyl-CoA + AMP + diphosphate. It carries out the reaction octanoate + ATP + CoA = octanoyl-CoA + AMP + diphosphate. It catalyses the reaction decanoate + ATP + CoA = decanoyl-CoA + AMP + diphosphate. The catalysed reaction is dodecanoate + ATP + CoA = dodecanoyl-CoA + AMP + diphosphate. In terms of biological role, catalyzes the activation of fatty acids by CoA to produce an acyl-CoA, the first step in fatty acid metabolism. Capable of activating medium-chain fatty acids with a preference for C6-12 fatty acids. This Mus musculus (Mouse) protein is Acyl-coenzyme A synthetase ACSM4, mitochondrial (Acsm4).